We begin with the raw amino-acid sequence, 330 residues long: Ribose-phosphate pyrophosphokinase (330 aa).

55–57 (DGE) contacts ATP. Mg(2+) contacts are provided by His-148 and Asp-187. Residue Lys-211 is part of the active site. D-ribose 5-phosphate contacts are provided by residues Arg-213, Asp-237, and 241–245 (DTGGT).

Belongs to the ribose-phosphate pyrophosphokinase family. Class I subfamily. In terms of assembly, homohexamer. It depends on Mg(2+) as a cofactor.

It is found in the cytoplasm. It carries out the reaction D-ribose 5-phosphate + ATP = 5-phospho-alpha-D-ribose 1-diphosphate + AMP + H(+). It participates in metabolic intermediate biosynthesis; 5-phospho-alpha-D-ribose 1-diphosphate biosynthesis; 5-phospho-alpha-D-ribose 1-diphosphate from D-ribose 5-phosphate (route I): step 1/1. Functionally, involved in the biosynthesis of the central metabolite phospho-alpha-D-ribosyl-1-pyrophosphate (PRPP) via the transfer of pyrophosphoryl group from ATP to 1-hydroxyl of ribose-5-phosphate (Rib-5-P). The sequence is that of Ribose-phosphate pyrophosphokinase from Nostoc sp. (strain PCC 7120 / SAG 25.82 / UTEX 2576).